A 266-amino-acid chain; its full sequence is Calpain small subunit 1 (266 aa).

N-acetylmethionine is present on M1. S6 bears the Phosphoserine mark. One can recognise an EF-hand 1; atypical domain in the interval 94–128; it reads EEVRQFRRLFAQLAGDDMEVSATELMNILNKVVTR. 10 residues coordinate Ca(2+): A107, D110, E112, E117, D135, D150, D152, T154, K156, and E161. 4 consecutive EF-hand domains span residues 137-170, 167-202, 203-231, and 232-266; these read FGIDTCRSMVAVMDSDTTGKLGFEEFKYLWNNIK, NNIKKWQAIYKQFDVDRSGTIGSSELPGAFEAAGFH, LNEHLYSMIIRRYSDEGGNMDFDNFISCL, and VRLDAMFRAFKSLDKDGTGQIQVNIQEWLQLTMYS. K177 carries the N6-acetyllysine modification. Ca(2+) is bound by residues D180, D182, S184, T186, E191, and D223.

Homodimer or heterodimer of a large (catalytic) and a small (regulatory) subunit. In presence of calcium, the heterodimer dissociates.

The protein resides in the cytoplasm. The protein localises to the cell membrane. Regulatory subunit of the calcium-regulated non-lysosomal thiol-protease which catalyzes limited proteolysis of substrates involved in cytoskeletal remodeling and signal transduction. Essential for embryonic development. In Sus scrofa (Pig), this protein is Calpain small subunit 1 (CAPNS1).